The chain runs to 309 residues: MVFPAKRFCLVPSMEGVRWAFSCGTWLPSRAEWLLAVRSIQPEEKERIGQFVFARDAKAAMAGRLMIRKLVAEKLNIPWNHIRLQRTAKGKPVLAKDSSNPYPNFNFNISHQGDYAVLAAEPELQVGIDIMKTSFPGRGSIPEFFHIMKRKFTNKEWETIRSFKDEWTQLDMFYRNWALKESFIKAIGVGLGFELQRLEFDLSPLNLDIGQVYKETRLFLDGEEEKEWAFEESKIDEHHFVAVALRKPDGSRHQDVPSQDDSKPTQRQFTILNFNDLMSSAVPMTPEDPSFWDCFCFTEEIPIRNGTKS.

Residues R47, 86–91 (RTAKGK), and 108–111 (NISH) contribute to the CoA site. Residues D129 and E181 each coordinate Mg(2+). CoA is bound at residue 181-185 (ESFIK). The residue at position 258 (S258) is a Phosphoserine.

The protein belongs to the P-Pant transferase superfamily. AcpS family. As to quaternary structure, monomer. Mg(2+) is required as a cofactor. As to expression, detected in heart, skeletal muscle, placenta, testis, brain, pancreas, liver and kidney.

Its subcellular location is the cytoplasm. The protein resides in the cytosol. The enzyme catalyses apo-[ACP] + CoA = holo-[ACP] + adenosine 3',5'-bisphosphate + H(+). It catalyses the reaction apo-[ACP] + acetyl-CoA = acetyl-[ACP] + adenosine 3',5'-bisphosphate + H(+). Functionally, catalyzes the post-translational modification of target proteins by phosphopantetheine. Can transfer the 4'-phosphopantetheine moiety from coenzyme A, regardless of whether the CoA is presented in the free thiol form or as an acetyl thioester, to a serine residue of a broad range of acceptors including the acyl carrier domain of FASN. The sequence is that of L-aminoadipate-semialdehyde dehydrogenase-phosphopantetheinyl transferase (AASDHPPT) from Homo sapiens (Human).